The chain runs to 950 residues: Lon protease homolog, mitochondrial (950 aa).

Residues 1–65 constitute a mitochondrion transit peptide; it reads MAASTGYVRL…VPMGGGQWRG (65 aa). Disordered regions lie at residues 67–94 and 212–243; these read WDAG…SGEG and PEGL…LGAK. The Lon N-terminal domain maps to 112-360; sequence LPLIAISRNP…KALSLLKKEF (249 aa). Residues 224–233 are compositionally biased toward basic residues; sequence KSRRKLKRGK. 513-520 lines the ATP pocket; the sequence is GPPGVGKT. A Lon proteolytic domain is found at 749–939; that stretch reads VTPPGVVMGL…RDIFRIAFPL (191 aa). Residues serine 845 and lysine 888 contribute to the active site.

It belongs to the peptidase S16 family. Homohexamer. Organized in a ring with a central cavity. The ATP-binding and proteolytic domains (AP-domain) form a hexameric chamber, while the N-terminal domain is arranged as a trimer of dimers. DNA and RNA binding is stimulated by substrate and inhibited by ATP binding. Interacts with TWNK and mitochondrial DNA polymerase subunit POLG.

It localises to the mitochondrion matrix. It carries out the reaction Hydrolysis of proteins in presence of ATP.. Its function is as follows. ATP-dependent serine protease that mediates the selective degradation of misfolded, unassembled or oxidatively damaged polypeptides as well as certain short-lived regulatory proteins in the mitochondrial matrix. Endogenous substrates include mitochondrial steroidogenic acute regulatory (StAR) protein, DELE1, helicase Twinkle (TWNK) and the large ribosomal subunit protein MRPL32/bL32m. MRPL32/bL32m is protected from degradation by LONP1 when it is bound to a nucleic acid (RNA), but TWNK is not. May also have a chaperone function in the assembly of inner membrane protein complexes. Participates in the regulation of mitochondrial gene expression and in the maintenance of the integrity of the mitochondrial genome. Binds to mitochondrial promoters and RNA in a single-stranded, site-specific, and strand-specific manner. May regulate mitochondrial DNA replication and/or gene expression using site-specific, single-stranded DNA binding to target the degradation of regulatory proteins binding to adjacent sites in mitochondrial promoters. The polypeptide is Lon protease homolog, mitochondrial (Lonp1) (Rattus norvegicus (Rat)).